A 486-amino-acid chain; its full sequence is Transcription factor aptf-4 (486 aa).

2 disordered regions span residues 25–49 (CEPS…SAKM) and 150–173 (LSTT…NQEK). Positions 150–169 (LSTTSANFTPDWNTTTNGPC) are enriched in polar residues. An H-S-H (helix-span-helix), dimerization region spans residues 301 to 430 (QRQRKVTCFS…IVEQAALYCE (130 aa)).

It belongs to the AP-2 family. Binds DNA as a dimer.

The protein localises to the nucleus. In terms of biological role, sequence-specific DNA-binding protein that interacts with enhancer elements to regulate transcription of selected genes. Required for neuroblast and epidermal morphogenesis, perhaps acting in cooperation with transcription factor aptf-2. This is Transcription factor aptf-4 from Caenorhabditis elegans.